Reading from the N-terminus, the 290-residue chain is D-tagatose 3-epimerase (290 aa).

Cysteine 66 lines the substrate pocket. The active-site Proton donor/acceptor is the glutamate 152. Glutamate 152 contributes to the Mn(2+) binding site. Substrate contacts are provided by residues glutamate 158 and 185–188 (DTFH). The Mn(2+) site is built by aspartate 185 and histidine 211. Substrate is bound at residue arginine 217. Glutamate 246 serves as the catalytic Proton donor/acceptor. Mn(2+) is bound at residue glutamate 246.

This sequence belongs to the hyi family. As to quaternary structure, homodimer. Mn(2+) is required as a cofactor.

It carries out the reaction keto-D-tagatose = keto-D-sorbose. The enzyme catalyses D-allulose = keto-D-fructose. The catalysed reaction is D-ribulose = D-xylulose. Its activity is regulated as follows. Strongly inhibited (about 90% of the enzyme activity) by Ag(+), Hg(2+) and p-chloromercuribenzoic acid. Cu(2+) and Zn(2+) inhibit about 60% of the enzyme activity. In terms of biological role, catalyzes the epimerization of various ketoses at the C(3) position. It is able to interconvert D-tagatose and D-ribulose to D-sorbose and D-xylulose, respectively. The enzyme is also able to accept other ketopentoses such as D-psicose with lower efficiency. The sequence is that of D-tagatose 3-epimerase from Pseudomonas cichorii.